Here is a 142-residue protein sequence, read N- to C-terminus: Hemoglobin subunit alpha-B (142 aa).

In terms of domain architecture, Globin spans 2–142 (PFSASDRHDI…VSETLYSKYR (141 aa)). O2 is bound at residue Gln-59. Residue His-88 coordinates heme b.

It belongs to the globin family. Heterotetramer of either two alpha-B chains or two alpha-C chains and two beta chains. The two major hemoglobins, B and C, associate upon deoxygenation to form a trimer of tetramers, BC2, that has a much lower affinity for oxygen than either component alone. Red blood cells.

In terms of biological role, the alpha-B chain is a component of adult hemoglobin B. The sequence is that of Hemoglobin subunit alpha-B from Aquarana catesbeiana (American bullfrog).